Here is a 119-residue protein sequence, read N- to C-terminus: Large ribosomal subunit protein uL22 (119 aa).

It belongs to the universal ribosomal protein uL22 family. In terms of assembly, part of the 50S ribosomal subunit.

Functionally, this protein binds specifically to 23S rRNA; its binding is stimulated by other ribosomal proteins, e.g. L4, L17, and L20. It is important during the early stages of 50S assembly. It makes multiple contacts with different domains of the 23S rRNA in the assembled 50S subunit and ribosome. The globular domain of the protein is located near the polypeptide exit tunnel on the outside of the subunit, while an extended beta-hairpin is found that lines the wall of the exit tunnel in the center of the 70S ribosome. The sequence is that of Large ribosomal subunit protein uL22 from Chlorobium phaeobacteroides (strain DSM 266 / SMG 266 / 2430).